Here is a 504-residue protein sequence, read N- to C-terminus: Xylose import ATP-binding protein XylG (504 aa).

2 ABC transporter domains span residues 6 to 243 (LEMQ…VGRE) and 262 to 504 (VRNF…TGGK). Residue 38–45 (GENGAGKS) coordinates ATP.

It belongs to the ABC transporter superfamily. Xylose importer (TC 3.A.1.2.4) family. The complex is composed of two ATP-binding proteins (XylG), two transmembrane proteins (XylH) and a solute-binding protein (XylF).

It is found in the cell membrane. The enzyme catalyses D-xylose(out) + ATP + H2O = D-xylose(in) + ADP + phosphate + H(+). Functionally, part of the ABC transporter complex XylFGH involved in xylose import. Responsible for energy coupling to the transport system. This chain is Xylose import ATP-binding protein XylG, found in Moorella thermoacetica (strain ATCC 39073 / JCM 9320).